Consider the following 140-residue polypeptide: uncharacterized protein (140 aa).

It belongs to the peptidase S24 family.

This is an uncharacterized protein from Haemophilus influenzae (strain ATCC 51907 / DSM 11121 / KW20 / Rd).